The sequence spans 1129 residues: Serine/threonine-protein kinase 11-interacting protein (1129 aa).

LRR repeat units follow at residues 107 to 128, 130 to 150, 162 to 183, 185 to 206, 208 to 229, 232 to 253, 254 to 275, and 279 to 300; these read SLRS…RSVY, QLEV…IALC, VLHT…LELL, SLKI…LKVL, ELQY…SVGN, KLHS…ENLP, NLQH…SGLA, and NLKQ…RALT. 4 disordered regions span residues 335–392, 428–475, 654–678, and 696–724; these read RLQP…RRGQ, DPEY…HVAP, GDIY…NHTG, and NPTG…GLAA. The segment covering 337–355 has biased composition (polar residues); the sequence is QPSSSATESSCTGDLTDSY. Positions 365–374 are enriched in basic residues; sequence LPRKKSRVKV. The span at 381–391 shows a compositional bias: basic and acidic residues; sequence ERSDSEYERRG. The span at 436 to 447 shows a compositional bias: pro residues; the sequence is HSPPPRASPSPT. Residues 448-458 are compositionally biased toward low complexity; the sequence is APSSVPKQKSP.

Belongs to the STK11IP family.

The protein resides in the cytoplasm. The chain is Serine/threonine-protein kinase 11-interacting protein (stk11ip) from Xenopus tropicalis (Western clawed frog).